Here is a 173-residue protein sequence, read N- to C-terminus: NADH-ubiquinone oxidoreductase chain 6 (173 aa).

Transmembrane regions (helical) follow at residues 1–21 (MTYFVLFLGLCFVLGSLAVAS), 27–47 (YGVVGLVLASIAGCGWLLSLG), 48–68 (VSFVSLVLFMVYLGGMLVVFV), 87–107 (VVGYGVGFVAVLMVGLIVGGF), and 139–159 (CGVGMFLVAGWGLLLTLFVVL).

Belongs to the complex I subunit 6 family.

It is found in the mitochondrion membrane. It carries out the reaction a ubiquinone + NADH + 5 H(+)(in) = a ubiquinol + NAD(+) + 4 H(+)(out). Core subunit of the mitochondrial membrane respiratory chain NADH dehydrogenase (Complex I) that is believed to belong to the minimal assembly required for catalysis. Complex I functions in the transfer of electrons from NADH to the respiratory chain. The immediate electron acceptor for the enzyme is believed to be ubiquinone. The polypeptide is NADH-ubiquinone oxidoreductase chain 6 (MT-ND6) (Aethia cristatella (Crested auklet)).